We begin with the raw amino-acid sequence, 314 residues long: MVSVNELGLDLFEELVENADLFNVAYHELDNGSRVVDCGVSVPGGYGAGDYFTRICMGGLGDIAFRQGMVGQFPMTFIDVNTDFPAISCLGSQKAGWTVKHDNFFAMGSGPARALSLQPKHTFEVIGYEDESDAAVICLEADRLPSGAVMEMIAEKCKVDVANVCALVAPTSSLVGSIQVAGRCVETAVYKLNELGFDTTKIIAAAGTAPIPPVRGAKLAMGVTNDATIYHGQINLTMNAPEIVDYLEKIPSCSSNGYGKPFNDIFKEAGYDFYKIDKSLFSPAEVIINEVSTGKVYQVGKVDTAVTLKSFGLA.

It belongs to the MCH family.

It localises to the cytoplasm. It catalyses the reaction 5,10-methenyl-5,6,7,8-tetrahydromethanopterin + H2O = N(5)-formyl-5,6,7,8-tetrahydromethanopterin + H(+). Its pathway is one-carbon metabolism; methanogenesis from CO(2); 5,10-methenyl-5,6,7,8-tetrahydromethanopterin from CO(2): step 3/3. Its function is as follows. Catalyzes the reversible interconversion of 5-formyl-H(4)MPT to methenyl-H(4)MPT(+). The chain is Methenyltetrahydromethanopterin cyclohydrolase from Methanocorpusculum labreanum (strain ATCC 43576 / DSM 4855 / Z).